A 290-amino-acid polypeptide reads, in one-letter code: Protoheme IX farnesyltransferase 1 (290 aa).

8 consecutive transmembrane segments (helical) span residues 8-28 (ITKP…FFLA), 36-56 (FLLL…GCVV), 85-105 (AAFV…FQVV), 108-128 (LSAV…TMWY), 131-151 (NSVY…LVGY), 152-172 (LAVT…FCLW), 211-231 (AYVV…EAGY), and 269-289 (LLVV…LPFI).

It belongs to the UbiA prenyltransferase family. Protoheme IX farnesyltransferase subfamily.

Its subcellular location is the cell inner membrane. It catalyses the reaction heme b + (2E,6E)-farnesyl diphosphate + H2O = Fe(II)-heme o + diphosphate. Its pathway is porphyrin-containing compound metabolism; heme O biosynthesis; heme O from protoheme: step 1/1. Converts heme B (protoheme IX) to heme O by substitution of the vinyl group on carbon 2 of heme B porphyrin ring with a hydroxyethyl farnesyl side group. The protein is Protoheme IX farnesyltransferase 1 of Vibrio campbellii (strain ATCC BAA-1116).